The primary structure comprises 259 residues: Thiazole synthase (259 aa).

K99 acts as the Schiff-base intermediate with DXP in catalysis. 1-deoxy-D-xylulose 5-phosphate is bound by residues G160, 186-187 (AG), and 208-209 (NT).

It belongs to the ThiG family. Homotetramer. Forms heterodimers with either ThiH or ThiS.

Its subcellular location is the cytoplasm. It catalyses the reaction [ThiS sulfur-carrier protein]-C-terminal-Gly-aminoethanethioate + 2-iminoacetate + 1-deoxy-D-xylulose 5-phosphate = [ThiS sulfur-carrier protein]-C-terminal Gly-Gly + 2-[(2R,5Z)-2-carboxy-4-methylthiazol-5(2H)-ylidene]ethyl phosphate + 2 H2O + H(+). Its pathway is cofactor biosynthesis; thiamine diphosphate biosynthesis. In terms of biological role, catalyzes the rearrangement of 1-deoxy-D-xylulose 5-phosphate (DXP) to produce the thiazole phosphate moiety of thiamine. Sulfur is provided by the thiocarboxylate moiety of the carrier protein ThiS. In vitro, sulfur can be provided by H(2)S. The chain is Thiazole synthase from Porphyromonas gingivalis (strain ATCC 33277 / DSM 20709 / CIP 103683 / JCM 12257 / NCTC 11834 / 2561).